A 480-amino-acid polypeptide reads, in one-letter code: MEYEVVIGLEVHAELATKSKIFCSCTTEFGGEPNTHCCPICTGMPGVLPVLNKKAVEYAIMAGLATNCQIARYSKQDRKNYFYPDLPKAYQISQYDLPLCYNGYIDIEVNGQKKRIGIKRIHIEEDAGKLLHDQWEEGSLVDFNRCGVPLIEIVTEPDLRSSEETRIFLEKLKAILQYTGVSDCKMQEGSLRVDVNLSVRPKGSKEFGTRTEMKNLNSFRSVVRAIEYEAKRQIEVLESGGVVVQETRRWDEAKGITLSMRTKEEAHDYRYFPEPDLPPIIVDDNWIEEIRKRIPELPDQKKERYIKEYGLPEYDAGVLTSSNAIANYFEECIKYTQNIKAASNWMMGEIMRILNDRGLEPEEIVNIKIRPNQLASLINLVDNKTISNTIAKQVFEEMFETGKDPEVIVKEKGLVQITDRNVILEAVKQAIANNPKSVEDYKNGKDKAFGFLVGQVMKITKGKANPQLVNEILREELEKI.

Belongs to the GatB/GatE family. GatB subfamily. In terms of assembly, heterotrimer of A, B and C subunits.

It carries out the reaction L-glutamyl-tRNA(Gln) + L-glutamine + ATP + H2O = L-glutaminyl-tRNA(Gln) + L-glutamate + ADP + phosphate + H(+). The catalysed reaction is L-aspartyl-tRNA(Asn) + L-glutamine + ATP + H2O = L-asparaginyl-tRNA(Asn) + L-glutamate + ADP + phosphate + 2 H(+). In terms of biological role, allows the formation of correctly charged Asn-tRNA(Asn) or Gln-tRNA(Gln) through the transamidation of misacylated Asp-tRNA(Asn) or Glu-tRNA(Gln) in organisms which lack either or both of asparaginyl-tRNA or glutaminyl-tRNA synthetases. The reaction takes place in the presence of glutamine and ATP through an activated phospho-Asp-tRNA(Asn) or phospho-Glu-tRNA(Gln). This Caldicellulosiruptor saccharolyticus (strain ATCC 43494 / DSM 8903 / Tp8T 6331) protein is Aspartyl/glutamyl-tRNA(Asn/Gln) amidotransferase subunit B.